The sequence spans 115 residues: NADH-ubiquinone oxidoreductase chain 3 (115 aa).

A run of 3 helical transmembrane segments spans residues 3–23 (LLMA…IAFW), 55–75 (FFLV…LLPL), and 84–104 (LSAM…GLMY).

This sequence belongs to the complex I subunit 3 family. In terms of assembly, core subunit of respiratory chain NADH dehydrogenase (Complex I) which is composed of 45 different subunits. Interacts with TMEM186. Interacts with TMEM242.

The protein localises to the mitochondrion inner membrane. The catalysed reaction is a ubiquinone + NADH + 5 H(+)(in) = a ubiquinol + NAD(+) + 4 H(+)(out). In terms of biological role, core subunit of the mitochondrial membrane respiratory chain NADH dehydrogenase (Complex I) which catalyzes electron transfer from NADH through the respiratory chain, using ubiquinone as an electron acceptor. Essential for the catalytic activity of complex I. The polypeptide is NADH-ubiquinone oxidoreductase chain 3 (Sigmodon ochrognathus (Yellow-nosed cotton rat)).